The primary structure comprises 283 residues: 4-diphosphocytidyl-2-C-methyl-D-erythritol kinase (283 aa).

Lys11 is a catalytic residue. Pro94–Ala104 serves as a coordination point for ATP. The active site involves Asp136.

It belongs to the GHMP kinase family. IspE subfamily.

The catalysed reaction is 4-CDP-2-C-methyl-D-erythritol + ATP = 4-CDP-2-C-methyl-D-erythritol 2-phosphate + ADP + H(+). The protein operates within isoprenoid biosynthesis; isopentenyl diphosphate biosynthesis via DXP pathway; isopentenyl diphosphate from 1-deoxy-D-xylulose 5-phosphate: step 3/6. Its function is as follows. Catalyzes the phosphorylation of the position 2 hydroxy group of 4-diphosphocytidyl-2C-methyl-D-erythritol. In Acetivibrio thermocellus (strain ATCC 27405 / DSM 1237 / JCM 9322 / NBRC 103400 / NCIMB 10682 / NRRL B-4536 / VPI 7372) (Clostridium thermocellum), this protein is 4-diphosphocytidyl-2-C-methyl-D-erythritol kinase.